The sequence spans 512 residues: ETS translocation variant 3 (512 aa).

A DNA-binding region (ETS) is located at residues Ile35 to Asn116. Residues Gln138–Asp196 form a disordered region. Phosphoserine is present on residues Ser139, Ser159, and Ser315. The segment covering His158–Gly184 has biased composition (polar residues). Residues Gln341–Ala512 are disordered. A compositionally biased stretch (basic and acidic residues) spans Ile380–Glu406. Residue Lys381 forms a Glycyl lysine isopeptide (Lys-Gly) (interchain with G-Cter in SUMO2) linkage. Position 388 is an N6-acetyllysine; alternate (Lys388). Lys388 is covalently cross-linked (Glycyl lysine isopeptide (Lys-Gly) (interchain with G-Cter in SUMO2); alternate). Acidic residues predominate over residues Glu443–Glu452. Basic and acidic residues-rich tracts occupy residues Asp453–Ala468 and Arg479–Lys491.

This sequence belongs to the ETS family.

The protein localises to the nucleus. In terms of biological role, transcriptional repressor that contribute to growth arrest during terminal macrophage differentiation by repressing target genes involved in Ras-dependent proliferation. Represses MMP1 promoter activity. The polypeptide is ETS translocation variant 3 (ETV3) (Ateles geoffroyi (Black-handed spider monkey)).